The chain runs to 465 residues: Intraflagellar transport protein 54 (465 aa).

2 disordered regions span residues 119–301 (VRSN…GFTM) and 347–366 (LHGD…DKKP). Positions 144–207 (LEALAREKAE…KQKQQQQQQQ (64 aa)) form a coiled coil. Residues 146–198 (ALAREKAEKERQRREQEQQERERKERERQEKEREEREKHELESRERAEAEQWK) are compositionally biased toward basic and acidic residues. The span at 199–220 (QKQQQQQQQQQSAISPQKSPPK) shows a compositional bias: low complexity. Basic and acidic residues predominate over residues 222–242 (RFADDDKTRVEEHQPVIERPH).

The protein belongs to the TRAF3IP1 family.

It is found in the cell projection. The protein localises to the cilium. It localises to the flagellum. Its subcellular location is the cytoplasm. The protein resides in the cytoskeleton. It is found in the flagellum axoneme. The protein localises to the flagellum basal body. Component of the intraflagellar transport complex B (IFT-B) involved in flagellar assembly. The chain is Intraflagellar transport protein 54 from Giardia intestinalis (strain ATCC 50803 / WB clone C6) (Giardia lamblia).